The primary structure comprises 659 residues: 4-alpha-glucanotransferase (659 aa).

Glu-123 acts as the Nucleophile in catalysis. Asp-214 (proton donor) is an active-site residue.

The protein belongs to the glycosyl hydrolase 57 family. As to quaternary structure, homodimer.

The catalysed reaction is Transfers a segment of a (1-&gt;4)-alpha-D-glucan to a new position in an acceptor, which may be glucose or a (1-&gt;4)-alpha-D-glucan.. Its activity is regulated as follows. Inhibited by p-chloromercuribenzoic acid, monoiodoacetic acid, mercury and nickel ions. Catalyzes the transglycosylation of maltooligosaccharides, yielding maltooligosaccharides of various lengths and glucose. Maltose and glucose can be used as acceptors in the transfer reaction. The sequence is that of 4-alpha-glucanotransferase (jgt) from Thermococcus litoralis (strain ATCC 51850 / DSM 5473 / JCM 8560 / NS-C).